Consider the following 149-residue polypeptide: MERTFIMVKPDGVQRGLVGEIISRFEKRGFKLVGLKLMQISRELAETHYGEHKGKPFFEGLLNFITSGPVVAMVWEGKEVIATAREMMGATNPLKAQPGTIRGTYGIDVGRNVIHGSDSPESAAREIALFFKEEELLSYEKTLDTWIYE.

6 residues coordinate ATP: K9, F57, R85, T91, R102, and N112. H115 acts as the Pros-phosphohistidine intermediate in catalysis.

The protein belongs to the NDK family. Homotetramer. The cofactor is Mg(2+).

It is found in the cytoplasm. The enzyme catalyses a 2'-deoxyribonucleoside 5'-diphosphate + ATP = a 2'-deoxyribonucleoside 5'-triphosphate + ADP. It catalyses the reaction a ribonucleoside 5'-diphosphate + ATP = a ribonucleoside 5'-triphosphate + ADP. Major role in the synthesis of nucleoside triphosphates other than ATP. The ATP gamma phosphate is transferred to the NDP beta phosphate via a ping-pong mechanism, using a phosphorylated active-site intermediate. This is Nucleoside diphosphate kinase from Carboxydothermus hydrogenoformans (strain ATCC BAA-161 / DSM 6008 / Z-2901).